A 514-amino-acid polypeptide reads, in one-letter code: Type-2 serine--tRNA ligase (514 aa).

Ala313 is a binding site for L-serine. Cys315 contacts Zn(2+). Position 344 (Arg344) interacts with L-serine. ATP contacts are provided by residues Arg344 to Glu346 and Arg355 to Val356. An L-serine-binding site is contributed by Arg361 to Glu363. Zn(2+) contacts are provided by Glu363 and Cys470. Position 477 (Arg477) interacts with ATP.

Belongs to the class-II aminoacyl-tRNA synthetase family. Type-2 seryl-tRNA synthetase subfamily. In terms of assembly, homodimer. Zn(2+) serves as cofactor.

It is found in the cytoplasm. The catalysed reaction is tRNA(Ser) + L-serine + ATP = L-seryl-tRNA(Ser) + AMP + diphosphate + H(+). It catalyses the reaction tRNA(Sec) + L-serine + ATP = L-seryl-tRNA(Sec) + AMP + diphosphate + H(+). The protein operates within aminoacyl-tRNA biosynthesis; selenocysteinyl-tRNA(Sec) biosynthesis; L-seryl-tRNA(Sec) from L-serine and tRNA(Sec): step 1/1. Functionally, catalyzes the attachment of serine to tRNA(Ser). Is also able to aminoacylate tRNA(Sec) with serine, to form the misacylated tRNA L-seryl-tRNA(Sec), which will be further converted into selenocysteinyl-tRNA(Sec). The polypeptide is Type-2 serine--tRNA ligase (Methanococcus maripaludis (strain C6 / ATCC BAA-1332)).